Here is a 502-residue protein sequence, read N- to C-terminus: Keratin, type II cytoskeletal 8 (502 aa).

Residues 1–98 are head; the sequence is MSVRSTKVTY…DPSIQQVRTE (98 aa). Ser-13, Ser-26, Ser-37, and Ser-40 each carry phosphoserine. The tract at residues 99–134 is coil 1A; sequence EKEQIKTLNNKFASFIDKVRFLEQQNKMLETKWNLL. Residues 99-410 enclose the IF rod domain; the sequence is EKEQIKTLNN…KLLEGEESRL (312 aa). Residues 135 to 151 form a linker 1 region; it reads QNQKTTRSNMDGMFEAY. The interval 152-243 is coil 1B; the sequence is ISNLRRQLDG…QLYEEELREM (92 aa). Residues 244–267 are linker 12; it reads QSQISDTSVVLSMDNNRSLDLDGI. The coil 2 stretch occupies residues 268–406; sequence IAEVRAQYED…ATYRKLLEGE (139 aa). Positions 269–390 are necessary for interaction with PNN; sequence AEVRAQYEDV…DYQELMNVKL (122 aa). The segment at 407–502 is tail; sequence ESRLESGFQN…SESSDVFSKP (96 aa). Residues Ser-425, Ser-428, Ser-436, and Ser-444 each carry the phosphoserine modification.

It belongs to the intermediate filament family. Heterotetramer of two type I and two type II keratins. Keratin-8 associates with keratin-18. Expressed in oocytes, eggs, embryos, liver and intestinal mucosa.

The protein resides in the cytoplasm. It localises to the nucleus. It is found in the nucleoplasm. Its subcellular location is the nucleus matrix. Together with KRT19, helps to link the contractile apparatus to dystrophin at the costameres of striated muscle. This is Keratin, type II cytoskeletal 8 from Xenopus laevis (African clawed frog).